Reading from the N-terminus, the 218-residue chain is N-(5'-phosphoribosyl)anthranilate isomerase (218 aa).

This sequence belongs to the TrpF family.

The catalysed reaction is N-(5-phospho-beta-D-ribosyl)anthranilate = 1-(2-carboxyphenylamino)-1-deoxy-D-ribulose 5-phosphate. Its pathway is amino-acid biosynthesis; L-tryptophan biosynthesis; L-tryptophan from chorismate: step 3/5. This is N-(5'-phosphoribosyl)anthranilate isomerase from Bordetella bronchiseptica (strain ATCC BAA-588 / NCTC 13252 / RB50) (Alcaligenes bronchisepticus).